The chain runs to 444 residues: Phosphoribosylamine--glycine ligase (444 aa).

The ATP-grasp domain maps to 109-324 (RNLFKKYEID…FLDVCFAIAE (216 aa)). Residue 140-202 (MTSLGKDVVV…EEKLVGVEFT (63 aa)) participates in ATP binding. Mg(2+) is bound by residues Gln-282, Glu-294, and Asn-296. Mn(2+)-binding residues include Gln-282, Glu-294, and Asn-296.

Belongs to the GARS family. Mg(2+) serves as cofactor. The cofactor is Mn(2+).

The enzyme catalyses 5-phospho-beta-D-ribosylamine + glycine + ATP = N(1)-(5-phospho-beta-D-ribosyl)glycinamide + ADP + phosphate + H(+). The protein operates within purine metabolism; IMP biosynthesis via de novo pathway; N(1)-(5-phospho-D-ribosyl)glycinamide from 5-phospho-alpha-D-ribose 1-diphosphate: step 2/2. In Methanococcus maripaludis (strain C7 / ATCC BAA-1331), this protein is Phosphoribosylamine--glycine ligase.